The following is a 145-amino-acid chain: MLGKILLLNGPNLNMLGKREPDIYGHDTLEDVVALATAEAAKHGLEVEALQSNHEGELIDALHNARGTHIGCVINPGGLTHTSVALLDAVKASELPTVEVHISNPHAREEFRHHSYISLAAVSVIAGAGIQGYRFAVDILANLKK.

Tyr-24 acts as the Proton acceptor in catalysis. Residues Asn-75, His-81, and Asp-88 each coordinate substrate. The active-site Proton donor is the His-101. Residues 102–103 (IS) and Arg-112 each bind substrate.

Belongs to the type-II 3-dehydroquinase family. Homododecamer.

It carries out the reaction 3-dehydroquinate = 3-dehydroshikimate + H2O. It participates in metabolic intermediate biosynthesis; chorismate biosynthesis; chorismate from D-erythrose 4-phosphate and phosphoenolpyruvate: step 3/7. Its function is as follows. Catalyzes a trans-dehydration via an enolate intermediate. This is 3-dehydroquinate dehydratase from Corynebacterium glutamicum (strain R).